A 563-amino-acid polypeptide reads, in one-letter code: Arginine--tRNA ligase (563 aa).

The 'HIGH' region signature appears at Ala-137–Asn-147.

It belongs to the class-I aminoacyl-tRNA synthetase family. As to quaternary structure, monomer.

It is found in the cytoplasm. The enzyme catalyses tRNA(Arg) + L-arginine + ATP = L-arginyl-tRNA(Arg) + AMP + diphosphate. The polypeptide is Arginine--tRNA ligase (Desulforudis audaxviator (strain MP104C)).